Consider the following 171-residue polypeptide: Adenine phosphoribosyltransferase (171 aa).

It belongs to the purine/pyrimidine phosphoribosyltransferase family. As to quaternary structure, homodimer.

The protein localises to the cytoplasm. It carries out the reaction AMP + diphosphate = 5-phospho-alpha-D-ribose 1-diphosphate + adenine. It participates in purine metabolism; AMP biosynthesis via salvage pathway; AMP from adenine: step 1/1. Functionally, catalyzes a salvage reaction resulting in the formation of AMP, that is energically less costly than de novo synthesis. The sequence is that of Adenine phosphoribosyltransferase from Nitrosococcus oceani (strain ATCC 19707 / BCRC 17464 / JCM 30415 / NCIMB 11848 / C-107).